The following is a 260-amino-acid chain: UPF0246 protein SCO2297 (260 aa).

The protein belongs to the UPF0246 family.

The polypeptide is UPF0246 protein SCO2297 (Streptomyces coelicolor (strain ATCC BAA-471 / A3(2) / M145)).